The primary structure comprises 378 residues: Filamin-binding LIM protein 1 (378 aa).

The segment at 1-69 is filamin-binding; the sequence is MASKPEKRVA…RSWMPPGRAA (69 aa). Residues 38–179 form a disordered region; it reads WPGRPWESAP…PPPEEPVSFP (142 aa). Residues 103–115 are compositionally biased toward pro residues; it reads LPPPPPPPAADLP. LIM zinc-binding domains are found at residues 186 to 247, 248 to 305, and 306 to 375; these read DICA…TLEK, CGKC…RKFA, and PVCS…RSAA. Positions 281-378 are PLEKHC1-binding; it reads IGDESFALDS…HVKRSAAGCC (98 aa).

Interacts with PLEKHC1, FLNA, FLNB and FLNC. Interacts with NKX2-5.

It is found in the cell junction. The protein resides in the focal adhesion. The protein localises to the cytoplasm. It localises to the cytoskeleton. Its subcellular location is the stress fiber. Functionally, serves as an anchoring site for cell-ECM adhesion proteins and filamin-containing actin filaments. Is implicated in cell shape modulation (spreading) and motility. May participate in the regulation of filamin-mediated cross-linking and stabilization of actin filaments. May also regulate the assembly of filamin-containing signaling complexes that control actin assembly. Promotes dissociation of FLNA from ITGB3 and ITGB7. Promotes activation of integrins and regulates integrin-mediated cell-cell adhesion. The polypeptide is Filamin-binding LIM protein 1 (FBLIM1) (Bos taurus (Bovine)).